A 142-amino-acid polypeptide reads, in one-letter code: MNLEAQISKIVEANGAALYDIETANEFDETIYRVLITKTGGVNLDLCATISNELSPFLDVHPPMNGHYRLEVSSPGIERKLSKPIHFQNAIGEKVKVKLLGGDKLKGVLKAADDKGITVETKQGEESYSYSDLGTVKTYFEW.

Belongs to the RimP family.

It localises to the cytoplasm. In terms of biological role, required for maturation of 30S ribosomal subunits. This chain is Ribosome maturation factor RimP, found in Sulfurovum sp. (strain NBC37-1).